A 63-amino-acid chain; its full sequence is MARVCEICGKGKQNGHSVSHSNIKTKRSFNANLQNVKIEVNGSVKKALVCTKCIKGNKISKAK.

Belongs to the bacterial ribosomal protein bL28 family.

This Brachyspira hyodysenteriae (strain ATCC 49526 / WA1) protein is Large ribosomal subunit protein bL28.